The primary structure comprises 394 residues: Na(+)/H(+) antiporter NhaA (394 aa).

A run of 11 helical transmembrane segments spans residues leucine 11–asparagine 31, leucine 59–valine 79, isoleucine 95–isoleucine 115, glycine 125–serine 145, phenylalanine 155–phenylalanine 175, histidine 177–methionine 197, threonine 203–leucine 220, alanine 254–valine 274, leucine 296–isoleucine 316, isoleucine 328–leucine 348, and leucine 365–threonine 385.

The protein belongs to the NhaA Na(+)/H(+) (TC 2.A.33) antiporter family.

Its subcellular location is the cell inner membrane. The enzyme catalyses Na(+)(in) + 2 H(+)(out) = Na(+)(out) + 2 H(+)(in). Na(+)/H(+) antiporter that extrudes sodium in exchange for external protons. The chain is Na(+)/H(+) antiporter NhaA from Actinobacillus pleuropneumoniae serotype 3 (strain JL03).